Reading from the N-terminus, the 358-residue chain is Psilocybin cluster transcription regulator (358 aa).

2 disordered regions span residues 1 to 40 (MAPATPATHDPALSHGAPPAPGAPAPANAPPNASGDIAGM) and 62 to 212 (SGGK…RRRR). A compositionally biased stretch (pro residues) spans 18–29 (PPAPGAPAPANA). Positions 79-91 (QTLSNLAQAQPYG) are enriched in polar residues. Residues 179–190 (PTTGRRGGRSAT) are compositionally biased toward low complexity. Residues 195-209 (EWSRQRKDNHKEVER) show a composition bias toward basic and acidic residues. The basic motif stretch occupies residues 199–212 (QRKDNHKEVERRRR). One can recognise a bHLH domain in the interval 199–249 (QRKDNHKEVERRRRGNINEGINELGRIVPSGSGEKAKGAILSRAVQYIHHL). Residues 213-249 (GNINEGINELGRIVPSGSGEKAKGAILSRAVQYIHHL) are helix-loop-helix motif. Residues 264–306 (KLLMDQAMGDLQAQLEEVKRLWEEERMARTRLEAELEVLRNMN) adopt a coiled-coil conformation. The segment at 308–358 (VNAGSAPASKDESAAGTKRRSTDGAEAATAATESSTANAEGERDGKRQRTE) is disordered. The segment covering 331 to 346 (GAEAATAATESSTANA) has biased composition (low complexity). A compositionally biased stretch (basic and acidic residues) spans 347–358 (EGERDGKRQRTE).

The protein resides in the nucleus. Functionally, transcription factor that may regulate the expression of the gene cluster that mediates the biosynthesis of psilocybin, a psychotropic tryptamine-derived natural product. The protein is Psilocybin cluster transcription regulator of Psilocybe cubensis (Psychedelic mushroom).